A 474-amino-acid polypeptide reads, in one-letter code: Cbb3-type cytochrome c oxidase subunit CcoN1 (474 aa).

Residues 1-16 (MNTATSTAYSYKVVRQ) lie on the Cytoplasmic side of the membrane. The helical transmembrane segment at 17 to 37 (FAIMTVVWGIVGMGLGVFIAA) threads the bilayer. At 38-60 (QLAWPFLNFDLPWTSFGRLRPLH) the chain is on the periplasmic side. H60 contacts heme b. The helical transmembrane segment at 61 to 81 (TNAVIFAFGGCALFATSYYSV) threads the bilayer. At 82–96 (QRTCQTTLFAPKLAA) the chain is on the cytoplasmic side. A helical membrane pass occupies residues 97–117 (FTFWGWQLVILLAAISLPLGF). Residues 118-129 (TSSKEYAELEWP) lie on the Periplasmic side of the membrane. Residues 130–150 (IDILITIVWVAYAVVFFGTLA) traverse the membrane as a helical segment. The Cytoplasmic portion of the chain corresponds to 151-156 (KRKVKH). A helical transmembrane segment spans residues 157–177 (IYVGNWFFGAFILTVAILHVV). At 178–205 (NNLEIPVTAMKSYSLYAGATDAMVQWWY) the chain is on the periplasmic side. Residues 206–226 (GHNAVGFFLTAGFLGIMYYFV) form a helical membrane-spanning segment. Residue H207 coordinates Cu cation. Topologically, residues 227 to 238 (PKQAERPVYSYR) are cytoplasmic. The helical transmembrane segment at 239 to 259 (LSIVHFWALITVYIWAGPHHL) threads the bilayer. H257 and H258 together coordinate Cu cation. Residues 260 to 270 (HYTALPDWAQS) are Periplasmic-facing. A helical membrane pass occupies residues 271–291 (LGMVMSLILLAPSWGGMINGM). The Cytoplasmic segment spans residues 292–308 (MTLSGAWHKLRSDPILR). Residues 309-329 (FLVVSLAFYGMSTFEGPMMAI) form a helical membrane-spanning segment. The Periplasmic portion of the chain corresponds to 330–345 (KTVNALSHYTDWTIGH). Residues H345 and H347 each contribute to the heme b site. A helical membrane pass occupies residues 346–366 (VHAGALGWVAMVSIGALYHLV). At 367 to 384 (PKVFGREQMHSIGLINTH) the chain is on the cytoplasmic side. Residues 385-405 (FWLATIGTVLYIASMWVNGIA) form a helical membrane-spanning segment. Over 406 to 432 (QGLMWRAINDDGTLTYSFVESLEASHP) the chain is Periplasmic. A helical membrane pass occupies residues 433–453 (GFVVRMIGGAIFFAGMLVMAY). At 454–474 (NTWRTVQAAKPAEYDAAAQIA) the chain is on the cytoplasmic side.

It belongs to the heme-copper respiratory oxidase family. As to quaternary structure, component of the cbb3-type cytochrome c oxidase at least composed of CcoN, CcoO, CcoQ and CcoP. The cofactor is Cu(2+). Heme b serves as cofactor.

Its subcellular location is the cell inner membrane. It catalyses the reaction 4 Fe(II)-[cytochrome c] + O2 + 8 H(+)(in) = 4 Fe(III)-[cytochrome c] + 2 H2O + 4 H(+)(out). The protein operates within energy metabolism; oxidative phosphorylation. In terms of biological role, cbb3-type cytochrome c oxidase is the component of the respiratory chain that catalyzes the reduction of oxygen to water. Subunits CcoN and CcoO form the functional core of the enzyme complex. Subunits CcoP and CcoQ may optionally bind to the core. CcoN is the catalytic subunit of the enzyme. Electrons originating in cytochrome c or a quinol are transferred to the bimetallic center formed by a high-spin heme and copper B. The complex also functions as a proton pump. The protein is Cbb3-type cytochrome c oxidase subunit CcoN1 of Stutzerimonas stutzeri (Pseudomonas stutzeri).